Consider the following 711-residue polypeptide: Ent-copalyl diphosphate synthase 1 (711 aa).

Position 145 (K145) interacts with substrate. The Mg(2+) site is built by D277 and D279. The DXDD motif signature appears at 277 to 280; it reads DIDD. K364 provides a ligand contact to substrate.

It belongs to the terpene synthase family. Tpsc subfamily. The cofactor is Mg(2+).

It catalyses the reaction (2E,6E,10E)-geranylgeranyl diphosphate = ent-copalyl diphosphate. It functions in the pathway secondary metabolite biosynthesis; terpenoid biosynthesis. Its function is as follows. Involved in the biosynthesis of ent-kaurene diterpenoids natural products such as oridonin, miltiradiene, eriocalyxin B and nezukol, known to exhibit antitumor, anti-inflammatory and antibacterial activities. Catalyzes the conversion of (2E,6E,10E)-geranylgeranyl diphosphate (GGPP) to ent-copalyl diphosphate (ent-CPP). This chain is Ent-copalyl diphosphate synthase 1, found in Isodon japonicus (Scutellaria japonica).